The chain runs to 329 residues: uncharacterized protein (329 aa).

The tract at residues 109–147 is disordered; that stretch reads KALGNDQTSSMTSSTTAVTVAKSGDGQQQTGEQKEEDWK. Positions 116 to 131 are enriched in low complexity; sequence TSSMTSSTTAVTVAKS.

This sequence to the C-terminal of MG321/MPN_456.

This is an uncharacterized protein from Mycoplasma pneumoniae (strain ATCC 29342 / M129 / Subtype 1) (Mycoplasmoides pneumoniae).